An 80-amino-acid polypeptide reads, in one-letter code: Protein FAM229B (80 aa).

Residues 1–44 form a disordered region; sequence MPFRFGTQPRRFPVEGGDSSIGLEPGLSSSATCNGKEMSPTRQL.

It belongs to the FAM229 family.

This chain is Protein FAM229B (FAM229B), found in Bos taurus (Bovine).